An 868-amino-acid chain; its full sequence is DNA mismatch repair protein MutS (868 aa).

An ATP-binding site is contributed by 620 to 627; that stretch reads GPNMGGKS.

This sequence belongs to the DNA mismatch repair MutS family.

Its function is as follows. This protein is involved in the repair of mismatches in DNA. It is possible that it carries out the mismatch recognition step. This protein has a weak ATPase activity. This is DNA mismatch repair protein MutS from Xylella fastidiosa (strain 9a5c).